A 23-amino-acid polypeptide reads, in one-letter code: Keratin (23 aa).

The 23-residue stretch at 1–23 folds into the IF rod domain; it reads YSSQLAQVQGLIGNVESQLAEIR. The coil 2 stretch occupies residues 1–23; sequence YSSQLAQVQGLIGNVESQLAEIR.

It belongs to the intermediate filament family.

The chain is Keratin from Cervus elaphus (Red deer).